A 536-amino-acid polypeptide reads, in one-letter code: Atrial natriuretic peptide receptor 3 (536 aa).

An N-terminal signal peptide occupies residues 1–26 (MRSLLLFTFSACVLLARVLLAGGASS). Residues 27–40 (GAGDTRPGSRRRAR) constitute a propeptide that is removed on maturation. At 41–478 (EALAAQKIEV…KSSGGLEESA (438 aa)) the chain is on the extracellular side. N-linked (GlcNAc...) asparagine glycosylation occurs at Asn81. Chloride-binding residues include Ser101, Val130, and Cys131. Intrachain disulfides connect Cys103–Cys131 and Cys208–Cys256. 2 N-linked (GlcNAc...) asparagine glycosylation sites follow: Asn288 and Asn389. Residues 479-499 (VTGIVVGALLGAGLLMAFYFF) form a helical membrane-spanning segment. Over 500–536 (RKKYRITIERRNQQEESNIGKHRELREDSIRSHFSVA) the chain is Cytoplasmic.

This sequence belongs to the ANF receptor family. As to quaternary structure, homodimer; disulfide-linked. Interacts with OSTN.

The protein localises to the cell membrane. In terms of biological role, receptor for the natriuretic peptide hormones, binding with similar affinities atrial natriuretic peptide NPPA/ANP, brain natriuretic peptide NPPB/BNP, and C-type natriuretic peptide NPPC/CNP. May function as a clearance receptor for NPPA, NPPB and NPPC, regulating their local concentrations and effects. Acts as a regulator of osteoblast differentiation and bone growth by binding to its ligand osteocrin, thereby preventing binding between NPR3/NPR-C and natriuretic peptides, leading to increase cGMP production. This Mus musculus (Mouse) protein is Atrial natriuretic peptide receptor 3 (Npr3).